The sequence spans 94 residues: MSRSLKKGPFVFYSLIKKVDQMNSNRFKSVILTWSRSCTIIPIMIGNTIGVYNGKEHIPVLVSDQMIGHKLGEFVQTRNYRGHKKHDKKTKTKR.

It belongs to the universal ribosomal protein uS19 family.

It is found in the plastid. The protein localises to the chloroplast. Protein S19 forms a complex with S13 that binds strongly to the 16S ribosomal RNA. In Euglena gracilis, this protein is Small ribosomal subunit protein uS19c (rps19).